A 222-amino-acid chain; its full sequence is Ribosome maturation factor RimM (222 aa).

A disordered region spans residues 1–22 (MTERKQGAARPLNRPLVQPQGE). Residues 145-222 (EDEFYWVDLI…RIVVDWGLDY (78 aa)) enclose the PRC barrel domain.

It belongs to the RimM family. In terms of assembly, binds ribosomal protein uS19.

The protein localises to the cytoplasm. Its function is as follows. An accessory protein needed during the final step in the assembly of 30S ribosomal subunit, possibly for assembly of the head region. Essential for efficient processing of 16S rRNA. May be needed both before and after RbfA during the maturation of 16S rRNA. It has affinity for free ribosomal 30S subunits but not for 70S ribosomes. The protein is Ribosome maturation factor RimM of Cupriavidus necator (strain ATCC 17699 / DSM 428 / KCTC 22496 / NCIMB 10442 / H16 / Stanier 337) (Ralstonia eutropha).